Here is a 579-residue protein sequence, read N- to C-terminus: Zinc finger protein 382 (579 aa).

Positions 1–12 are enriched in basic residues; sequence MGRPGRKPRGRA. The segment at 1–37 is disordered; sequence MGRPGRKPRGRARPGLFPFPKEELRQGGSSPANLNAM. Positions 12–135 are mediates interaction with TRIM28; it reads ARPGLFPFPK…DKPPKSIVII (124 aa). Positions 27–36 are enriched in polar residues; sequence GGSSPANLNA. Represses transcription stretches follow at residues 40–81 and 105–240; these read GPVS…FISV and IFPS…PEQR. The KRAB domain occupies 42-113; sequence VSFKDVTVDF…RIFPSQSYLE (72 aa). The C2H2-type 1; degenerate zinc-finger motif lies at 241-263; sequence FEYNKCDSSFLMTGVEFPHGRAH. C2H2-type zinc fingers lie at residues 325–347, 353–375, 381–403, 409–431, 437–459, 465–487, 493–515, 521–543, and 549–571; these read FQCP…ERIH, YICC…EKTH, YLCV…HKAH, YECT…QRTH, YQCT…QRTH, YICS…QRIH, YICS…YRIH, NGCP…QKIH, and YECQ…QKTH. The required for transcriptional repression activity; probably mediates sequence-specific DNA-binding stretch occupies residues 325–579; the sequence is FQCPYCGNSF…THKTETMRFQ (255 aa).

It belongs to the krueppel C2H2-type zinc-finger protein family. In terms of assembly, interacts with TRIM28; enhances the transcriptional repressor activity.

It is found in the nucleus. Functions as a sequence-specific transcriptional repressor. The chain is Zinc finger protein 382 (Znf382) from Mus musculus (Mouse).